A 143-amino-acid chain; its full sequence is Mannitol-specific phosphotransferase enzyme IIA component (143 aa).

The PTS EIIA type-2 domain maps to 2 to 142 (QVLAKENIKL…EDLIAIFNEV (141 aa)). The active-site Tele-phosphohistidine intermediate is His-62. His-62 is subject to Phosphohistidine; by HPr. Ser-74 is modified (phosphoserine).

Its subcellular location is the cytoplasm. Its function is as follows. The phosphoenolpyruvate-dependent sugar phosphotransferase system (sugar PTS), a major carbohydrate active transport system, catalyzes the phosphorylation of incoming sugar substrates concomitantly with their translocation across the cell membrane. The enzyme II CmtAB PTS system is involved in D-mannitol transport. This Bacillus subtilis (strain 168) protein is Mannitol-specific phosphotransferase enzyme IIA component (mtlF).